The chain runs to 118 residues: Co-chaperonin GroES (118 aa).

Belongs to the GroES chaperonin family. As to quaternary structure, heptamer of 7 subunits arranged in a ring. Interacts with the chaperonin GroEL.

The protein resides in the cytoplasm. Functionally, together with the chaperonin GroEL, plays an essential role in assisting protein folding. The GroEL-GroES system forms a nano-cage that allows encapsulation of the non-native substrate proteins and provides a physical environment optimized to promote and accelerate protein folding. GroES binds to the apical surface of the GroEL ring, thereby capping the opening of the GroEL channel. The chain is Co-chaperonin GroES from Helicobacter pylori (strain HPAG1).